Consider the following 221-residue polypeptide: Ribosomal RNA small subunit methyltransferase Nep1 (221 aa).

S-adenosyl-L-methionine contacts are provided by residues Gly-174, Gly-179, and 196 to 201 (IGNVSL).

Belongs to the class IV-like SAM-binding methyltransferase superfamily. RNA methyltransferase NEP1 family. In terms of assembly, homodimer.

It carries out the reaction a pseudouridine in rRNA + S-adenosyl-L-methionine = an N(1)-methylpseudouridine in rRNA + S-adenosyl-L-homocysteine + H(+). Functionally, methyltransferase involved in ribosomal biogenesis. Specifically catalyzes the N1-methylation of the pseudouridine corresponding to position 914 in M.jannaschii 16S rRNA. The sequence is that of Ribosomal RNA small subunit methyltransferase Nep1 from Pyrobaculum calidifontis (strain DSM 21063 / JCM 11548 / VA1).